The sequence spans 64 residues: Large ribosomal subunit protein eL24 (64 aa).

The Zn(2+) site is built by Cys-6, Cys-9, Cys-32, and Cys-36. The C4-type zinc finger occupies 6-36; the sequence is CNFCGKSIEPGTGKKFVKKDGSVMFICSSKC.

It belongs to the eukaryotic ribosomal protein eL24 family. Part of the 50S ribosomal subunit. Forms a cluster with proteins L3 and L14. Zn(2+) serves as cofactor.

Functionally, binds to the 23S rRNA. This Methanococcus aeolicus (strain ATCC BAA-1280 / DSM 17508 / OCM 812 / Nankai-3) protein is Large ribosomal subunit protein eL24.